Here is a 190-residue protein sequence, read N- to C-terminus: Xanthine phosphoribosyltransferase (190 aa).

L20 and N27 together coordinate xanthine. 128–132 (ANGKA) contributes to the 5-phospho-alpha-D-ribose 1-diphosphate binding site. A xanthine-binding site is contributed by K156.

It belongs to the purine/pyrimidine phosphoribosyltransferase family. Xpt subfamily. In terms of assembly, homodimer.

The protein localises to the cytoplasm. The catalysed reaction is XMP + diphosphate = xanthine + 5-phospho-alpha-D-ribose 1-diphosphate. It functions in the pathway purine metabolism; XMP biosynthesis via salvage pathway; XMP from xanthine: step 1/1. Its function is as follows. Converts the preformed base xanthine, a product of nucleic acid breakdown, to xanthosine 5'-monophosphate (XMP), so it can be reused for RNA or DNA synthesis. This chain is Xanthine phosphoribosyltransferase, found in Pseudomonas entomophila (strain L48).